Consider the following 1003-residue polypeptide: Glycine--tRNA ligase (1003 aa).

Residues 1–310 are glycine--tRNA ligase alpha subunit; it reads MSSQPLTLQA…VTPKKIPTIC (310 aa). The glycine--tRNA ligase beta subunit stretch occupies residues 311–1003; it reads QPEDFLLEIG…CFGFYAWDVL (693 aa).

This sequence belongs to the class-II aminoacyl-tRNA synthetase family.

It is found in the cytoplasm. The enzyme catalyses tRNA(Gly) + glycine + ATP = glycyl-tRNA(Gly) + AMP + diphosphate. The sequence is that of Glycine--tRNA ligase (glyQS) from Chlamydia trachomatis serovar L2 (strain ATCC VR-902B / DSM 19102 / 434/Bu).